Reading from the N-terminus, the 671-residue chain is DNA ligase (671 aa).

NAD(+) is bound by residues 32-36 (DAEYD), 81-82 (SL), and glutamate 113. The active-site N6-AMP-lysine intermediate is lysine 115. NAD(+)-binding residues include arginine 136, glutamate 173, lysine 290, and lysine 314. Zn(2+) is bound by residues cysteine 408, cysteine 411, cysteine 426, and cysteine 432. In terms of domain architecture, BRCT spans 593–671 (EIDSPFAGKT…EAEMIRLLGA (79 aa)).

It belongs to the NAD-dependent DNA ligase family. LigA subfamily. Mg(2+) serves as cofactor. It depends on Mn(2+) as a cofactor.

The enzyme catalyses NAD(+) + (deoxyribonucleotide)n-3'-hydroxyl + 5'-phospho-(deoxyribonucleotide)m = (deoxyribonucleotide)n+m + AMP + beta-nicotinamide D-nucleotide.. Its function is as follows. DNA ligase that catalyzes the formation of phosphodiester linkages between 5'-phosphoryl and 3'-hydroxyl groups in double-stranded DNA using NAD as a coenzyme and as the energy source for the reaction. It is essential for DNA replication and repair of damaged DNA. The polypeptide is DNA ligase (Salmonella paratyphi A (strain ATCC 9150 / SARB42)).